The sequence spans 300 residues: 4-hydroxybenzoate octaprenyltransferase (300 aa).

8 consecutive transmembrane segments (helical) span residues 32–52, 55–75, 108–128, 149–169, 178–198, 222–242, 246–266, and 278–298; these read IGTY…SEGA, LKNL…GCVI, LFGI…ALTI, YLPQ…AFAA, AWLL…MYAM, AAVA…GAQH, VYYQ…QHLI, and FLNN…EFLF.

The protein belongs to the UbiA prenyltransferase family. Mg(2+) serves as cofactor.

It is found in the cell inner membrane. It catalyses the reaction all-trans-octaprenyl diphosphate + 4-hydroxybenzoate = 4-hydroxy-3-(all-trans-octaprenyl)benzoate + diphosphate. It participates in cofactor biosynthesis; ubiquinone biosynthesis. In terms of biological role, catalyzes the prenylation of para-hydroxybenzoate (PHB) with an all-trans polyprenyl group. Mediates the second step in the final reaction sequence of ubiquinone-8 (UQ-8) biosynthesis, which is the condensation of the polyisoprenoid side chain with PHB, generating the first membrane-bound Q intermediate 3-octaprenyl-4-hydroxybenzoate. The polypeptide is 4-hydroxybenzoate octaprenyltransferase (Hahella chejuensis (strain KCTC 2396)).